We begin with the raw amino-acid sequence, 421 residues long: MKVLPAKKVEGVLSVPPDKSITHRALILSALAETESTLYNLLRCLDTERTHDILEKLGTRFEGDWEKMKVFPKPFAEPIEPLFCGNSGTTTRLMSGVLASYEMFTVLYGDSSLSRRPMRRVIEPLEMMGARFMARQNNYLPMAIKGNHLSGISYKTPVASAQVKSAVLLAGLRASGRTIVIEPAKSRDHTERMLKNLGVPVEVEGTRVVLEPATFRGFTMKVPGDISSAAFFVVLGAIHPNARITVTDVGLNPTRTGLLEVMKLMGANLEWEITEENLEPIGTVRVETSPNLKGVVVPEHLVPLMIDELPLVALLGVFAEGETVVRNAEELRKKESDRIRVLVENFKRLGVEIEEFKDGFKIVGKQSIKGGSVDPEGDHRMAMLFSIAGLVSEEGVDVKDHECVAVSFPNFYELLERVVIS.

3-phosphoshikimate is bound by residues Lys19, Ser20, and Arg24. Residue Lys19 participates in phosphoenolpyruvate binding. Phosphoenolpyruvate is bound by residues Gly88 and Arg116. The 3-phosphoshikimate site is built by Ser160, Gln162, Asp307, and Lys334. Position 162 (Gln162) interacts with phosphoenolpyruvate. Asp307 (proton acceptor) is an active-site residue. Positions 338 and 380 each coordinate phosphoenolpyruvate.

The protein belongs to the EPSP synthase family. As to quaternary structure, monomer.

Its subcellular location is the cytoplasm. It carries out the reaction 3-phosphoshikimate + phosphoenolpyruvate = 5-O-(1-carboxyvinyl)-3-phosphoshikimate + phosphate. It participates in metabolic intermediate biosynthesis; chorismate biosynthesis; chorismate from D-erythrose 4-phosphate and phosphoenolpyruvate: step 6/7. Its function is as follows. Catalyzes the transfer of the enolpyruvyl moiety of phosphoenolpyruvate (PEP) to the 5-hydroxyl of shikimate-3-phosphate (S3P) to produce enolpyruvyl shikimate-3-phosphate and inorganic phosphate. The chain is 3-phosphoshikimate 1-carboxyvinyltransferase from Thermotoga sp. (strain RQ2).